Reading from the N-terminus, the 155-residue chain is MKIQLIAVGTKMPDWVTKGFEEYQRRFPKDMPFELIEIPAGKRGKNADIKRILEQEGKAMLSACQKSRIITLDIPGKPWTTEQLAQQLEAWKHDGRNVALLIGGPEGLSPECKAATEQSWSLSPLTLPHPLVRIVVAESLYRAWSLSTNHPYHRE.

S-adenosyl-L-methionine-binding positions include L72, G103, and 122 to 127 (LSPLTL).

It belongs to the RNA methyltransferase RlmH family. Homodimer.

The protein localises to the cytoplasm. The enzyme catalyses pseudouridine(1915) in 23S rRNA + S-adenosyl-L-methionine = N(3)-methylpseudouridine(1915) in 23S rRNA + S-adenosyl-L-homocysteine + H(+). In terms of biological role, specifically methylates the pseudouridine at position 1915 (m3Psi1915) in 23S rRNA. This chain is Ribosomal RNA large subunit methyltransferase H, found in Histophilus somni (strain 2336) (Haemophilus somnus).